The sequence spans 215 residues: Pyrrolidone-carboxylate peptidase (215 aa).

Active-site residues include Glu-78, Cys-141, and His-165.

The protein belongs to the peptidase C15 family. Homotetramer.

It localises to the cytoplasm. It carries out the reaction Release of an N-terminal pyroglutamyl group from a polypeptide, the second amino acid generally not being Pro.. Its function is as follows. Removes 5-oxoproline from various penultimate amino acid residues except L-proline. This is Pyrrolidone-carboxylate peptidase from Streptococcus pyogenes serotype M18 (strain MGAS8232).